Here is a 616-residue protein sequence, read N- to C-terminus: Vitamin B12 transporter BtuB (616 aa).

An N-terminal signal peptide occupies residues 1 to 20 (MIKKISLLTALSVTAFSGWA). Positions 26-33 (DSLVVTAN) match the TonB box motif. In terms of domain architecture, TBDR plug spans 38–152 (PVNTVLAPTS…IGGVVNIITT (115 aa)). Cyanocob(III)alamin is bound by residues L83, S85, N92, and 110–111 (VT). One can recognise a TBDR beta-barrel domain in the interval 155–616 (KDGTTLNAGI…EYTLSGSYTF (462 aa)). 3 consecutive transmembrane segments (beta stranded) span residues 158 to 165 (TTLNAGIG), 169 to 178 (YQNYGGSTQQ), and 184 to 195 (TRVTLAGDYTYT). 4 residues coordinate Ca(2+): D199, Q211, D213, and D215. 2 beta stranded membrane passes run 217 to 227 (FMNKTLYGALE) and 232 to 248 (DQWT…NRTA). Residues Y249, D250, and D263 each contribute to the Ca(2+) site. A run of 17 beta stranded transmembrane segments spans residues 265–279 (RQLY…LRFN), 281–298 (DLFH…KDYN), 311–327 (TLDE…NAVD), 330–339 (HGNIGAGVDW), 355–371 (YDLR…QKFG), 373–383 (VTLEGAVRSDD), 387–402 (FGRH…WEFI), 405–419 (YRFI…KAPN), 436–445 (ESKQWEGAFE), 451–460 (VNWRVSAYRN), 475–492 (YYNV…TASF), 496–511 (PLTH…ARNA), 519–531 (RRAK…QLDT), 537–552 (DWSL…YDTD), 560–574 (NVKL…VAVS), 587–598 (IANLFDKDYETA), and 604–616 (AGRE…SYTF). T311 is a cyanocob(III)alamin binding site. Residue R519 participates in cyanocob(III)alamin binding. Residues 599 to 616 (YGYATAGREYTLSGSYTF) carry the TonB C-terminal box motif.

Belongs to the TonB-dependent receptor family. BtuB (TC 1.B.14.3.1) subfamily.

The protein localises to the cell outer membrane. Functionally, involved in the active translocation of vitamin B12 (cyanocobalamin) across the outer membrane to the periplasmic space. It derives its energy for transport by interacting with the trans-periplasmic membrane protein TonB. This is Vitamin B12 transporter BtuB from Cronobacter sakazakii (strain ATCC BAA-894) (Enterobacter sakazakii).